The following is a 152-amino-acid chain: Smith-Magenis syndrome chromosomal region candidate gene 5 protein homolog (152 aa).

Residues 41-77 are disordered; sequence TPCAGPSSQAPPQPPQASPPAAPDHSRTPSLLASSHS. Residues 49-62 are compositionally biased toward pro residues; sequence QAPPQPPQASPPAA.

The polypeptide is Smith-Magenis syndrome chromosomal region candidate gene 5 protein homolog (SMCR5) (Macaca fascicularis (Crab-eating macaque)).